The chain runs to 555 residues: Methyl-coenzyme M reductase subunit alpha (555 aa).

Q152 is a binding site for coenzyme F430. Coenzyme B is bound by residues R230, 261 to 262 (KH), and R275. Coenzyme M-binding residues include Y337 and Y448.

It belongs to the methyl-coenzyme M reductase alpha subunit family. As to quaternary structure, MCR is a hexamer of two alpha, two beta, and two gamma chains, forming a dimer of heterotrimers. Coenzyme F430 is required as a cofactor.

The protein resides in the cytoplasm. The catalysed reaction is coenzyme B + methyl-coenzyme M = methane + coenzyme M-coenzyme B heterodisulfide. It participates in one-carbon metabolism; methyl-coenzyme M reduction; methane from methyl-coenzyme M: step 1/1. Functionally, component of the methyl-coenzyme M reductase (MCR) I that catalyzes the reductive cleavage of methyl-coenzyme M (CoM-S-CH3 or 2-(methylthio)ethanesulfonate) using coenzyme B (CoB or 7-mercaptoheptanoylthreonine phosphate) as reductant which results in the production of methane and the mixed heterodisulfide of CoB and CoM (CoM-S-S-CoB). This is the final step in methanogenesis. This Methanococcus voltae protein is Methyl-coenzyme M reductase subunit alpha (mcrA).